The following is a 1135-amino-acid chain: Exportin-6-A (1135 aa).

Residues 31–97 form the Importin N-terminal domain; sequence IESLLNNFAQ…RNSLPKLLLS (67 aa).

The protein belongs to the exportin family. As to expression, expressed during meiotic maturation 2 hours after germinal vesicle break down (GVBD) and in unfertilized and fertilized eggs, but not in oocytes (at protein level). Expressed in somatic cells, in oocytes, during meiotic maturation and in unfertilized and fertilized eggs.

The protein localises to the nucleus. It localises to the cytoplasm. Mediates the nuclear export of actin and profilin-actin complexes in somatic cells. Oocyte nuclei lack active actin export. This Xenopus laevis (African clawed frog) protein is Exportin-6-A (xpo6-a).